The chain runs to 154 residues: Ecotin-like protein 2 (154 aa).

Belongs to the protease inhibitor I11 (ecotin) family.

The chain is Ecotin-like protein 2 from Leishmania braziliensis.